The primary structure comprises 151 residues: Putative transcriptional regulatory protein TK2151 (151 aa).

The protein belongs to the Tfx family.

Its function is as follows. Putative transcriptional regulator. The sequence is that of Putative transcriptional regulatory protein TK2151 from Thermococcus kodakarensis (strain ATCC BAA-918 / JCM 12380 / KOD1) (Pyrococcus kodakaraensis (strain KOD1)).